Here is a 178-residue protein sequence, read N- to C-terminus: PEST proteolytic signal-containing nuclear protein (178 aa).

The span at 1–15 (MADGKAGDEKPEKSQ) shows a compositional bias: basic and acidic residues. The tract at residues 1-82 (MADGKAGDEK…FAIGSQTTKK (82 aa)) is disordered. Ala2 carries the N-acetylalanine modification. Residues 37–47 (SSSNGGESSSR) show a composition bias toward low complexity. Ser53 bears the Phosphoserine mark. Lys64 is subject to N6-acetyllysine. Residues Ser77, Ser87, and Ser119 each carry the phosphoserine modification. The segment at 134–178 (NIGRDTPTSAGPNSFNKGKHGFSDNQKLWERNIKSHLGNVHDQDN) is disordered. At Thr139 the chain carries Phosphothreonine. Over residues 139 to 149 (TPTSAGPNSFN) the composition is skewed to polar residues. A Phosphoserine modification is found at Ser147. N6-acetyllysine is present on residues Lys150 and Lys152. Residues 160-178 (KLWERNIKSHLGNVHDQDN) show a composition bias toward basic and acidic residues.

In terms of assembly, interacts with UHRF2/NIRF. In terms of processing, ubiquitinated; mediated by UHRF2 and leading to its subsequent proteasomal degradation. Post-translationally, N-terminally acetylated in a HYPK-dependent manner by the NatA acetyltransferase complex which is composed of NAA10 and NAA15.

Its subcellular location is the nucleus. May be involved in cell cycle regulation. This chain is PEST proteolytic signal-containing nuclear protein (PCNP), found in Homo sapiens (Human).